A 131-amino-acid polypeptide reads, in one-letter code: Bacteriohemerythrin (131 aa).

8 residues coordinate Fe cation: His-20, Glu-23, His-56, Glu-60, His-75, His-79, His-117, and Asp-122.

It belongs to the hemerythrin family. Monomer.

Its function is as follows. Oxygen-binding protein. May be involved in a storage mechanism or for delivery to oxygen-requiring enzymes. The oxygen-binding site contains two iron atoms. The chain is Bacteriohemerythrin from Aquifex aeolicus (strain VF5).